The following is a 343-amino-acid chain: Cytoplasmic tRNA 2-thiolation protein 1 (343 aa).

This sequence belongs to the TtcA family. CTU1/NCS6/ATPBD3 subfamily.

It localises to the cytoplasm. The protein operates within tRNA modification; 5-methoxycarbonylmethyl-2-thiouridine-tRNA biosynthesis. In terms of biological role, plays a central role in 2-thiolation of mcm(5)S(2)U at tRNA wobble positions of tRNA(Lys), tRNA(Glu) and tRNA(Gln). Directly binds tRNAs and probably acts by catalyzing adenylation of tRNAs, an intermediate required for 2-thiolation. It is unclear whether it acts as a sulfurtransferase that transfers sulfur from thiocarboxylated URM1 onto the uridine of tRNAs at wobble position. The chain is Cytoplasmic tRNA 2-thiolation protein 1 from Drosophila erecta (Fruit fly).